Reading from the N-terminus, the 354-residue chain is CCN family member 3 (354 aa).

The first 21 residues, 1–21 (MSLFLRKRCLCLGFLLFHLLS), serve as a signal peptide directing secretion. Residues 25–99 (ASLRCPSRCP…NNQTGICMVP (75 aa)) enclose the IGFBP N-terminal domain. Intrachain disulfides connect C29-C55, C33-C57, C37-C58, C44-C61, C69-C83, and C75-C96. N-linked (GlcNAc...) asparagine glycosylation is present at N91. The VWFC domain maps to 102 to 168 (DNCVFDGVIY…GECCEKWTCG (67 aa)). A TSP type-1 domain is found at 202-247 (NCIEQTTEWSACSKSCGMGVSTRVTNRNRQCEMVKQTRLCIVRPCE). Residue C241 is the site of S-palmitoyl cysteine attachment. 5 disulfides stabilise this stretch: C261/C298, C278/C312, C289/C328, C292/C330, and C297/C334. The region spanning 261–335 (CLRTKKSLKA…GTCTCYSNCP (75 aa)) is the CTCK domain. Residue N277 is glycosylated (N-linked (GlcNAc...) asparagine).

It belongs to the CCN family. As to quaternary structure, interacts with FBLN1. Interacts (via CTCK domain) with NOTCH1 (via the EGF-like repeat region). Interacts with GJA1/CX43. Interacts with ITGA5:ITGB1, ITGAV:ITGB3 and ITGAV:ITGB5. Interacts with ZDHHC22; the interaction may lead to CCN3 palmitoylation. May be palmitoylated on Cys-241, which is important for extracellular secretion. In terms of tissue distribution, expressed in large vessels including the ascending aorta, carotid arteries, and the thoracic aorta, in medium-sized vessels such as coronary arteries and small pulmonary veins and also in small vessels. In addition, also found to be present in the heart (at protein level). Expressed in astrocytes (at protein level). Detected in brain, bone, lung and muscle tissues. Expressed in skin, expression highly increases 5 days post-wounding, peaking on the 7th day to decline after 9 days. Expressed in pancreatic ducts and beta-cell islets. Expressed in the brain, in arcuate nucleus ESR1/KISS1 neurons, during lactation (at protein level).

The protein resides in the secreted. It is found in the cytoplasm. It localises to the cell junction. The protein localises to the gap junction. In terms of biological role, immediate-early protein playing a role in various cellular processes including proliferation, adhesion, migration, differentiation and survival. Acts by binding to integrins or membrane receptors such as NOTCH1. Essential regulator of hematopoietic stem and progenitor cell function. Inhibits myogenic differentiation through the activation of Notch-signaling pathway. Inhibits vascular smooth muscle cells proliferation by increasing expression of cell-cycle regulators such as CDKN2B or CDKN1A independently of TGFB1 signaling. Ligand of integrins ITGAV:ITGB3 and ITGA5:ITGB1, acts directly upon endothelial cells to stimulate pro-angiogenic activities and induces angiogenesis. In endothelial cells, supports cell adhesion, induces directed cell migration (chemotaxis) and promotes cell survival. Also plays a role in cutaneous wound healing acting as integrin receptor ligand. Supports skin fibroblast adhesion through ITGA5:ITGB1 and ITGA6:ITGB1 and induces fibroblast chemotaxis through ITGAV:ITGB5. Seems to enhance bFGF-induced DNA synthesis in fibroblasts. Involved in bone regeneration as a negative regulator. Enhances the articular chondrocytic phenotype, whereas it repressed the one representing endochondral ossification. Impairs pancreatic beta-cell function, inhibits beta-cell proliferation and insulin secretion. Plays a role as negative regulator of endothelial pro-inflammatory activation reducing monocyte adhesion, its anti-inflammatory effects occur secondary to the inhibition of NF-kappaB signaling pathway. Contributes to the control and coordination of inflammatory processes in atherosclerosis. Attenuates inflammatory pain through regulation of IL1B- and TNF-induced MMP9, MMP2 and CCL2 expression. Inhibits MMP9 expression through ITGB1 engagement. Brain osteoanabolic hormone. During lactation, maintains the maternal skeleton and viability of offspring. In this context, may act on osteochondral skeletal stem cells. This Mus musculus (Mouse) protein is CCN family member 3 (Ccn3).